The primary structure comprises 754 residues: Glutathione biosynthesis bifunctional protein GshAB (754 aa).

The tract at residues 1–332 is glutamate--cysteine ligase; that stretch reads MTLNQLLQKL…QGHALNEKIA (332 aa). Residues 488–746 form the ATP-grasp domain; it reads KKILADAGFP…ITTKILDKLF (259 aa). An ATP-binding site is contributed by 515–573; that stretch reads PLIKDKQIVVKPKSTNFGLGISIFQEPASLDNYQKALEIAFAEDTSVLVEEFIPGTEYR. Residues aspartate 695, glutamate 716, and asparagine 718 each coordinate Mg(2+). Mn(2+)-binding residues include aspartate 695, glutamate 716, and asparagine 718.

This sequence in the N-terminal section; belongs to the glutamate--cysteine ligase type 1 family. Type 2 subfamily. In terms of assembly, monomer. Mg(2+) is required as a cofactor. Mn(2+) serves as cofactor.

The enzyme catalyses L-cysteine + L-glutamate + ATP = gamma-L-glutamyl-L-cysteine + ADP + phosphate + H(+). It carries out the reaction gamma-L-glutamyl-L-cysteine + glycine + ATP = glutathione + ADP + phosphate + H(+). Its pathway is sulfur metabolism; glutathione biosynthesis; glutathione from L-cysteine and L-glutamate: step 1/2. The protein operates within sulfur metabolism; glutathione biosynthesis; glutathione from L-cysteine and L-glutamate: step 2/2. Its function is as follows. Synthesizes glutathione from L-glutamate and L-cysteine via gamma-L-glutamyl-L-cysteine. The sequence is that of Glutathione biosynthesis bifunctional protein GshAB from Streptococcus thermophilus (strain CNRZ 1066).